The chain runs to 432 residues: D-amino acid dehydrogenase (432 aa).

3-17 (VVILGSGVVGVTSAW) lines the FAD pocket.

Belongs to the DadA oxidoreductase family. FAD serves as cofactor.

The catalysed reaction is a D-alpha-amino acid + A + H2O = a 2-oxocarboxylate + AH2 + NH4(+). It functions in the pathway amino-acid degradation; D-alanine degradation; NH(3) and pyruvate from D-alanine: step 1/1. Its function is as follows. Oxidative deamination of D-amino acids. In Salmonella paratyphi C (strain RKS4594), this protein is D-amino acid dehydrogenase.